The sequence spans 570 residues: Glycine--tRNA ligase (570 aa).

Substrate contacts are provided by arginine 99 and glutamate 165. ATP contacts are provided by residues 197-199, 207-212, 324-325, and 443-446; these read RNE, LRLREF, EC, and GIDR. Residue 212-216 participates in substrate binding; that stretch reads FTQAE. 439-443 is a binding site for substrate; sequence EPSFG.

The protein belongs to the class-II aminoacyl-tRNA synthetase family.

The protein resides in the cytoplasm. It catalyses the reaction tRNA(Gly) + glycine + ATP = glycyl-tRNA(Gly) + AMP + diphosphate. Its function is as follows. Catalyzes the attachment of glycine to tRNA(Gly). This Thermococcus gammatolerans (strain DSM 15229 / JCM 11827 / EJ3) protein is Glycine--tRNA ligase.